Reading from the N-terminus, the 538-residue chain is Ubiquitin domain-containing protein DSK2a (538 aa).

Residues 18 to 93 (VAVNVRCSNG…VHMVRGFVPS (76 aa)) form the Ubiquitin-like domain. The segment at 95-120 (PSAPAANAGNQTTAPQAVGSNDSSNL) is disordered. Over residues 102–119 (AGNQTTAPQAVGSNDSSN) the composition is skewed to polar residues. 2 STI1 domains span residues 138–179 (GNAM…QNLM) and 192–231 (NPQM…MREM). A disordered region spans residues 289–316 (QGVTTQGSDTSNNISAPNAETGTPNANP). 2 consecutive STI1 domains span residues 357 to 394 (SPLG…MNQL) and 398 to 433 (NPQL…MQQM). Positions 491-535 (PPEERFATQLQQLQEMGFYDRAENIRALLATNGNVNAAVERLLGS) constitute a UBA domain.

Interacts with 'Lys-48'-linked polyubiquitin chains via its UBA domain. Interacts with RPN10 and RPN13. Interacts with PEX2 and PEX12. As to expression, ubiquitous with a strong expression level in inflorescence.

Its subcellular location is the nucleus. The protein localises to the cytoplasm. Its function is as follows. Binds and presumably selects ubiquitin-conjugates for destruction. Prefers multiubiquitin chains rather than single ubiquitins, with a binding affinity for 'Lys-48'-linked ubiquitin chains. Acts as a ubiquitin receptor that associates with the 26S proteasomal docking subunit RPN10 for the indirect recognition of ubiquitinated substrates of ubiquitin/26S proteasome-mediated proteolysis (UPP). This chain is Ubiquitin domain-containing protein DSK2a (DSK2A), found in Arabidopsis thaliana (Mouse-ear cress).